A 157-amino-acid polypeptide reads, in one-letter code: Baculoviral IAP repeat-containing protein 5.2-A (157 aa).

One copy of the BIR repeat lies at 31–101; it reads RLRTFSNWPF…KHSPSCLFIA (71 aa). Position 47 is a phosphothreonine; by CDK1 (Thr-47). Zn(2+)-binding residues include Cys-70, Cys-73, His-90, and Cys-97.

This sequence belongs to the IAP family. Component of the CPC at least composed of survivin/birc5, incenp, cdca8/borealin and/or cdca9/dasra-A, and aurkb/aurora-B. Interacts directly with incenp (via N-terminus). Interacts with rxra; the interaction is stronger in the absence of 9-cis retinoic acids. In terms of processing, ubiquitination is required for centrosome-targeting. As to expression, highly expressed in vascular endothelial cells of tadpoles.

Its subcellular location is the cytoplasm. It localises to the nucleus. The protein localises to the chromosome. The protein resides in the centromere. It is found in the cytoskeleton. Its subcellular location is the spindle. In terms of biological role, component of the chromosomal passenger complex (CPC), a complex that acts as a key regulator of mitosis. The CPC complex has essential functions at the centromere in ensuring correct chromosome alignment and segregation and is required for chromatin-induced microtubule stabilization and spindle assembly. Does not appear to exhibit anti-apoptotic activity. Plays a role in increasing blood vessel size during development. The chain is Baculoviral IAP repeat-containing protein 5.2-A (birc5.2-a) from Xenopus laevis (African clawed frog).